We begin with the raw amino-acid sequence, 1024 residues long: Probable alpha-mannosidase At5g13980 (1024 aa).

An N-terminal signal peptide occupies residues 1-21; the sequence is MDLAKFLCWIVLLLGISLVES. Asparagine 27 carries an N-linked (GlcNAc...) asparagine glycan. Zn(2+) contacts are provided by histidine 46 and aspartate 48. N-linked (GlcNAc...) asparagine glycosylation occurs at asparagine 63. A Zn(2+)-binding site is contributed by aspartate 168. The N-linked (GlcNAc...) asparagine glycan is linked to asparagine 278. Position 410 (histidine 410) interacts with Zn(2+). A disulfide bond links cysteine 461 and cysteine 469. Asparagine 465, asparagine 475, asparagine 637, asparagine 658, asparagine 733, and asparagine 823 each carry an N-linked (GlcNAc...) asparagine glycan. The cysteines at positions 827 and 832 are disulfide-linked.

The protein belongs to the glycosyl hydrolase 38 family. Homodimer. Requires Zn(2+) as cofactor.

The enzyme catalyses Hydrolysis of terminal, non-reducing alpha-D-mannose residues in alpha-D-mannosides.. In terms of biological role, liberates mannose from p-nitrophenyl-alpha-D-mannoside in vitro. The protein is Probable alpha-mannosidase At5g13980 of Arabidopsis thaliana (Mouse-ear cress).